The sequence spans 429 residues: Histidine--tRNA ligase (429 aa).

Belongs to the class-II aminoacyl-tRNA synthetase family. In terms of assembly, homodimer.

It is found in the cytoplasm. The enzyme catalyses tRNA(His) + L-histidine + ATP = L-histidyl-tRNA(His) + AMP + diphosphate + H(+). This is Histidine--tRNA ligase from Acidovorax ebreus (strain TPSY) (Diaphorobacter sp. (strain TPSY)).